The chain runs to 162 residues: Protein-export protein SecB (162 aa).

It belongs to the SecB family. Homotetramer, a dimer of dimers. One homotetramer interacts with 1 SecA dimer.

The protein localises to the cytoplasm. Functionally, one of the proteins required for the normal export of preproteins out of the cell cytoplasm. It is a molecular chaperone that binds to a subset of precursor proteins, maintaining them in a translocation-competent state. It also specifically binds to its receptor SecA. In Pseudoalteromonas translucida (strain TAC 125), this protein is Protein-export protein SecB.